The chain runs to 72 residues: UPF0337 protein bsl2407 (72 aa).

The disordered stretch occupies residues 1–55 (MGSTTDKIKGNANEAIGKAKQGIGEATGSDRLKGEGVVQEVKGKGQQAMGDAKDA). A compositionally biased stretch (low complexity) spans 35 to 47 (EGVVQEVKGKGQQ).

It belongs to the UPF0337 (CsbD) family.

The chain is UPF0337 protein bsl2407 from Bradyrhizobium diazoefficiens (strain JCM 10833 / BCRC 13528 / IAM 13628 / NBRC 14792 / USDA 110).